The sequence spans 268 residues: Glycine/sarcosine N-methyltransferase (268 aa).

Residues Y26, W34, R43, A67, D88, 114–115 (DW), and L132 contribute to the S-adenosyl-L-methionine site. Substrate contacts are provided by N134, R167, and Y206.

Belongs to the class I-like SAM-binding methyltransferase superfamily. Glycine N-methyltransferase family. In terms of assembly, monomer.

It catalyses the reaction glycine + 2 S-adenosyl-L-methionine = N,N-dimethylglycine + 2 S-adenosyl-L-homocysteine + 2 H(+). The catalysed reaction is glycine + S-adenosyl-L-methionine = sarcosine + S-adenosyl-L-homocysteine + H(+). The enzyme catalyses sarcosine + S-adenosyl-L-methionine = N,N-dimethylglycine + S-adenosyl-L-homocysteine + H(+). The protein operates within amine and polyamine biosynthesis; betaine biosynthesis via glycine pathway; betaine from glycine: step 1/3. It functions in the pathway amine and polyamine biosynthesis; betaine biosynthesis via glycine pathway; betaine from glycine: step 2/3. Its activity is regulated as follows. p-chloromercuribenzoic acid inhibits more than 95% of the GSMT activities on glycine and sarcosine, and S-adenosylhomocysteine (AdoHcy) inhibits completely GSMT activities. Catalyzes the methylation of glycine and sarcosine to sarcosine and dimethylglycine, respectively, with S-adenosylmethionine (AdoMet) acting as the methyl donor. It has strict specificity for glycine and sarcosine as the methyl group acceptors. This is Glycine/sarcosine N-methyltransferase from Halorhodospira halochloris (Ectothiorhodospira halochloris).